The following is a 779-amino-acid chain: Phosphoribosylformylglycinamidine synthase subunit PurL (779 aa).

The active site involves H52. Residues Y55 and K94 each coordinate ATP. Residue E96 participates in Mg(2+) binding. Substrate contacts are provided by residues 97-100 (SHNH) and R119. H98 serves as the catalytic Proton acceptor. D120 provides a ligand contact to Mg(2+). Q243 serves as a coordination point for substrate. D271 provides a ligand contact to Mg(2+). A substrate-binding site is contributed by 315–317 (ESQ). ATP is bound by residues N523 and G560. N561 is a binding site for Mg(2+). S563 contributes to the substrate binding site.

Belongs to the FGAMS family. In terms of assembly, monomer. Part of the FGAM synthase complex composed of 1 PurL, 1 PurQ and 2 PurS subunits.

Its subcellular location is the cytoplasm. The catalysed reaction is N(2)-formyl-N(1)-(5-phospho-beta-D-ribosyl)glycinamide + L-glutamine + ATP + H2O = 2-formamido-N(1)-(5-O-phospho-beta-D-ribosyl)acetamidine + L-glutamate + ADP + phosphate + H(+). Its pathway is purine metabolism; IMP biosynthesis via de novo pathway; 5-amino-1-(5-phospho-D-ribosyl)imidazole from N(2)-formyl-N(1)-(5-phospho-D-ribosyl)glycinamide: step 1/2. Functionally, part of the phosphoribosylformylglycinamidine synthase complex involved in the purines biosynthetic pathway. Catalyzes the ATP-dependent conversion of formylglycinamide ribonucleotide (FGAR) and glutamine to yield formylglycinamidine ribonucleotide (FGAM) and glutamate. The FGAM synthase complex is composed of three subunits. PurQ produces an ammonia molecule by converting glutamine to glutamate. PurL transfers the ammonia molecule to FGAR to form FGAM in an ATP-dependent manner. PurS interacts with PurQ and PurL and is thought to assist in the transfer of the ammonia molecule from PurQ to PurL. This Prochlorococcus marinus (strain AS9601) protein is Phosphoribosylformylglycinamidine synthase subunit PurL.